We begin with the raw amino-acid sequence, 1057 residues long: Glycine dehydrogenase (decarboxylating), mitochondrial (1057 aa).

The N-terminal 86 residues, 1 to 86 (MERARRLANR…GVGYPSQSRS (86 aa)), are a transit peptide targeting the mitochondrion. Residues 18–27 (SEAKQNRKTE) show a composition bias toward basic and acidic residues. The disordered stretch occupies residues 18–47 (SEAKQNRKTESTSTTTTTPLPFSLSGSSSR). Residues 28-47 (STSTTTTTPLPFSLSGSSSR) show a composition bias toward low complexity. At lysine 792 the chain carries N6-(pyridoxal phosphate)lysine.

Belongs to the GcvP family. As to quaternary structure, homodimer. The glycine cleavage system is composed of four proteins: P, T, L and H. Pyridoxal 5'-phosphate serves as cofactor. In terms of tissue distribution, highly expressed in leaves. Detected in roots and embryos.

The protein resides in the mitochondrion. The catalysed reaction is N(6)-[(R)-lipoyl]-L-lysyl-[glycine-cleavage complex H protein] + glycine + H(+) = N(6)-[(R)-S(8)-aminomethyldihydrolipoyl]-L-lysyl-[glycine-cleavage complex H protein] + CO2. In terms of biological role, the glycine cleavage system catalyzes the degradation of glycine. The P protein binds the alpha-amino group of glycine through its pyridoxal phosphate cofactor; CO(2) is released and the remaining methylamine moiety is then transferred to the lipoamide cofactor of the H protein. The protein is Glycine dehydrogenase (decarboxylating), mitochondrial (GDCSP) of Pisum sativum (Garden pea).